Here is a 730-residue protein sequence, read N- to C-terminus: Elongation factor 2 (730 aa).

The tr-type G domain occupies 19-260; it reads EKIRNIGIVA…MVIRFLPNPL (242 aa). GTP contacts are provided by residues 28 to 35, 94 to 98, and 148 to 151; these read AHIDHGKT, DTPGH, and NKVD. Histidine 596 carries the post-translational modification Diphthamide.

Belongs to the TRAFAC class translation factor GTPase superfamily. Classic translation factor GTPase family. EF-G/EF-2 subfamily.

The protein localises to the cytoplasm. Its function is as follows. Catalyzes the GTP-dependent ribosomal translocation step during translation elongation. During this step, the ribosome changes from the pre-translocational (PRE) to the post-translocational (POST) state as the newly formed A-site-bound peptidyl-tRNA and P-site-bound deacylated tRNA move to the P and E sites, respectively. Catalyzes the coordinated movement of the two tRNA molecules, the mRNA and conformational changes in the ribosome. The chain is Elongation factor 2 (fusA) from Methanosarcina thermophila.